Here is a 215-residue protein sequence, read N- to C-terminus: Recombination protein RecR (215 aa).

The C4-type zinc-finger motif lies at 74–89 (CQRCGHLSADPICDIC). The Toprim domain maps to 97 to 191 (GVICVVADSR…RVTRIAYGLP (95 aa)).

It belongs to the RecR family.

In terms of biological role, may play a role in DNA repair. It seems to be involved in an RecBC-independent recombinational process of DNA repair. It may act with RecF and RecO. The chain is Recombination protein RecR from Synechococcus sp. (strain RCC307).